Here is a 102-residue protein sequence, read N- to C-terminus: Methane monooxygenase component D (102 aa).

The soluble methane monooxygenase (sMMO) consists of four components A/MMOH (composed of alpha/MmoX, beta/MmoY and gamma/MmoZ), B/MMOB (MmoB), C/MMOR (MmoC) and D/MMOD (MmoD).

This Methylosinus trichosporium protein is Methane monooxygenase component D (mmoD).